We begin with the raw amino-acid sequence, 262 residues long: Tryptophan synthase alpha chain (262 aa).

Residues Glu-49 and Asp-60 each act as proton acceptor in the active site.

It belongs to the TrpA family. Tetramer of two alpha and two beta chains.

It catalyses the reaction (1S,2R)-1-C-(indol-3-yl)glycerol 3-phosphate + L-serine = D-glyceraldehyde 3-phosphate + L-tryptophan + H2O. It participates in amino-acid biosynthesis; L-tryptophan biosynthesis; L-tryptophan from chorismate: step 5/5. Functionally, the alpha subunit is responsible for the aldol cleavage of indoleglycerol phosphate to indole and glyceraldehyde 3-phosphate. This Thermoanaerobacter pseudethanolicus (strain ATCC 33223 / 39E) (Clostridium thermohydrosulfuricum) protein is Tryptophan synthase alpha chain.